A 588-amino-acid chain; its full sequence is MNNSINHKFHHISRAEYQELLAVSRGDAVADYIIDNVSILDLINGGEISGPIVIKGRYIAGVGAEYADAPALQRIDARGATAVPGFIDAHLHIESSMMTPVTFETATLPRGLTTVICDPHEIVNVMGEAGFAWFARCAEQARQNQYLQVSSCVPALEGCDVNGASFTLEQMLAWRDHPQVTGLAEMMDYPGVISGQNALLDKLDAFRHLTLDGHCPGLGGKELNAYITAGIENCHESYQLEEGRRKLQLGMSLMIREGSAARNLNALAPLINEFNSPQCMLCTDDRNPWEIAHEGHIDALIRRLIEQHNVPLHVAYRVASWSTARHFGLNHLDLLAPGKQADIVLLSDARKVTVQQVLVKGEPIDAQTLQAEESARLAQSAPPYGNTIARQPVSASDFALQFTPGKRYRVIDVIHNELITHSHSSVYSENGFDRDDVCFIAVLERYGQRLAPACGLLGGFGLNEGALAATVSHDSHNIVVIGRSAEEMALAVYQVIQDGGGLCVVRNGQVQSHLPLPIAGLMSTDTAQSLAEQIDALKAAARECGPLPDEPFIQMAFLSLPVIPALKLTSQGLFDGEKFVFTTLEVTE.

Belongs to the metallo-dependent hydrolases superfamily. Adenine deaminase family. In terms of assembly, homodimer. Mn(2+) serves as cofactor.

The catalysed reaction is adenine + H2O + H(+) = hypoxanthine + NH4(+). The sequence is that of Adenine deaminase from Shigella boydii serotype 4 (strain Sb227).